Here is a 467-residue protein sequence, read N- to C-terminus: L-seryl-tRNA(Sec) selenium transferase (467 aa).

Lys298 is modified (N6-(pyridoxal phosphate)lysine).

It belongs to the SelA family. The cofactor is pyridoxal 5'-phosphate.

It localises to the cytoplasm. The catalysed reaction is L-seryl-tRNA(Sec) + selenophosphate + H(+) = L-selenocysteinyl-tRNA(Sec) + phosphate. Its pathway is aminoacyl-tRNA biosynthesis; selenocysteinyl-tRNA(Sec) biosynthesis; selenocysteinyl-tRNA(Sec) from L-seryl-tRNA(Sec) (bacterial route): step 1/1. In terms of biological role, converts seryl-tRNA(Sec) to selenocysteinyl-tRNA(Sec) required for selenoprotein biosynthesis. In Alkaliphilus oremlandii (strain OhILAs) (Clostridium oremlandii (strain OhILAs)), this protein is L-seryl-tRNA(Sec) selenium transferase.